The chain runs to 212 residues: N-(5'-phosphoribosyl)anthranilate isomerase (212 aa).

The protein belongs to the TrpF family.

The catalysed reaction is N-(5-phospho-beta-D-ribosyl)anthranilate = 1-(2-carboxyphenylamino)-1-deoxy-D-ribulose 5-phosphate. Its pathway is amino-acid biosynthesis; L-tryptophan biosynthesis; L-tryptophan from chorismate: step 3/5. This is N-(5'-phosphoribosyl)anthranilate isomerase from Roseiflexus castenholzii (strain DSM 13941 / HLO8).